The following is a 252-amino-acid chain: Ditrans,polycis-undecaprenyl-diphosphate synthase ((2E,6E)-farnesyl-diphosphate specific) (252 aa).

Asp25 is an active-site residue. Asp25 contributes to the Mg(2+) binding site. Substrate-binding positions include 26-29 (GNGR), Trp30, Arg38, His42, and 70-72 (SSE). Catalysis depends on Asn73, which acts as the Proton acceptor. Substrate-binding residues include Trp74, Arg76, and Arg193. His198 lines the Mg(2+) pocket. Substrate is bound at residue 199-201 (RIS). Residue Glu212 coordinates Mg(2+).

It belongs to the UPP synthase family. Homodimer. Mg(2+) serves as cofactor.

It catalyses the reaction 8 isopentenyl diphosphate + (2E,6E)-farnesyl diphosphate = di-trans,octa-cis-undecaprenyl diphosphate + 8 diphosphate. Functionally, catalyzes the sequential condensation of isopentenyl diphosphate (IPP) with (2E,6E)-farnesyl diphosphate (E,E-FPP) to yield (2Z,6Z,10Z,14Z,18Z,22Z,26Z,30Z,34E,38E)-undecaprenyl diphosphate (di-trans,octa-cis-UPP). UPP is the precursor of glycosyl carrier lipid in the biosynthesis of bacterial cell wall polysaccharide components such as peptidoglycan and lipopolysaccharide. The chain is Ditrans,polycis-undecaprenyl-diphosphate synthase ((2E,6E)-farnesyl-diphosphate specific) from Salmonella paratyphi A (strain ATCC 9150 / SARB42).